The sequence spans 88 residues: Small ribosomal subunit protein bS18 (88 aa).

It belongs to the bacterial ribosomal protein bS18 family. Part of the 30S ribosomal subunit. Forms a tight heterodimer with protein bS6.

Its function is as follows. Binds as a heterodimer with protein bS6 to the central domain of the 16S rRNA, where it helps stabilize the platform of the 30S subunit. The sequence is that of Small ribosomal subunit protein bS18 from Aliarcobacter butzleri (strain RM4018) (Arcobacter butzleri).